Consider the following 451-residue polypeptide: Chromosomal replication initiator protein DnaA (451 aa).

A domain I, interacts with DnaA modulators region spans residues 1-82 (MENSLWKQCL…RLELQIGSSA (82 aa)). A domain II region spans residues 82-114 (AVVAPPRRRQVSVTTPSPSAAADQTPATRSAAS). Residues 85–112 (APPRRRQVSVTTPSPSAAADQTPATRSA) are disordered. Positions 115-331 (NLNSNFTFDT…GALRRVVANA (217 aa)) are domain III, AAA+ region. Gly159, Gly161, Lys162, and Thr163 together coordinate ATP. Residues 332–451 (QFTGQEITVE…YSNLLRTLST (120 aa)) are domain IV, binds dsDNA.

The protein belongs to the DnaA family. As to quaternary structure, oligomerizes as a right-handed, spiral filament on DNA at oriC.

It localises to the cytoplasm. In terms of biological role, plays an essential role in the initiation and regulation of chromosomal replication. ATP-DnaA binds to the origin of replication (oriC) to initiate formation of the DNA replication initiation complex once per cell cycle. Binds the DnaA box (a 9 base pair repeat at the origin) and separates the double-stranded (ds)DNA. Forms a right-handed helical filament on oriC DNA; dsDNA binds to the exterior of the filament while single-stranded (ss)DNA is stabiized in the filament's interior. The ATP-DnaA-oriC complex binds and stabilizes one strand of the AT-rich DNA unwinding element (DUE), permitting loading of DNA polymerase. After initiation quickly degrades to an ADP-DnaA complex that is not apt for DNA replication. Binds acidic phospholipids. The sequence is that of Chromosomal replication initiator protein DnaA from Alkalilimnicola ehrlichii (strain ATCC BAA-1101 / DSM 17681 / MLHE-1).